We begin with the raw amino-acid sequence, 43 residues long: Protein PsbN (43 aa).

Residues 5-27 (TLVTISISCLLVSFTGYAIYTSF) traverse the membrane as a helical segment.

Belongs to the PsbN family.

Its subcellular location is the plastid. The protein localises to the chloroplast thylakoid membrane. Functionally, may play a role in photosystem I and II biogenesis. This chain is Protein PsbN, found in Welwitschia mirabilis (Tree tumbo).